The chain runs to 456 residues: Bifunctional protein GlmU (456 aa).

The tract at residues 1-228 (MPQNTLNTVI…SHLAAGVNNK (228 aa)) is pyrophosphorylase. UDP-N-acetyl-alpha-D-glucosamine is bound by residues 11-14 (LAAG), K25, Q75, 80-81 (GT), 102-104 (YGD), G138, E153, N168, and N226. D104 serves as a coordination point for Mg(2+). N226 serves as a coordination point for Mg(2+). The segment at 229–249 (RQLAELERIFQTEQAQELLKA) is linker. Residues 250-456 (GVTLRDPARF…GWVRPEKNKQ (207 aa)) are N-acetyltransferase. Residues R332 and K350 each coordinate UDP-N-acetyl-alpha-D-glucosamine. Residue H362 is the Proton acceptor of the active site. Residues Y365 and N376 each coordinate UDP-N-acetyl-alpha-D-glucosamine. Residues A379, 385 to 386 (NY), S404, A422, and R439 contribute to the acetyl-CoA site.

The protein in the N-terminal section; belongs to the N-acetylglucosamine-1-phosphate uridyltransferase family. This sequence in the C-terminal section; belongs to the transferase hexapeptide repeat family. Homotrimer. It depends on Mg(2+) as a cofactor.

The protein localises to the cytoplasm. The enzyme catalyses alpha-D-glucosamine 1-phosphate + acetyl-CoA = N-acetyl-alpha-D-glucosamine 1-phosphate + CoA + H(+). It carries out the reaction N-acetyl-alpha-D-glucosamine 1-phosphate + UTP + H(+) = UDP-N-acetyl-alpha-D-glucosamine + diphosphate. Its pathway is nucleotide-sugar biosynthesis; UDP-N-acetyl-alpha-D-glucosamine biosynthesis; N-acetyl-alpha-D-glucosamine 1-phosphate from alpha-D-glucosamine 6-phosphate (route II): step 2/2. The protein operates within nucleotide-sugar biosynthesis; UDP-N-acetyl-alpha-D-glucosamine biosynthesis; UDP-N-acetyl-alpha-D-glucosamine from N-acetyl-alpha-D-glucosamine 1-phosphate: step 1/1. It functions in the pathway bacterial outer membrane biogenesis; LPS lipid A biosynthesis. Functionally, catalyzes the last two sequential reactions in the de novo biosynthetic pathway for UDP-N-acetylglucosamine (UDP-GlcNAc). The C-terminal domain catalyzes the transfer of acetyl group from acetyl coenzyme A to glucosamine-1-phosphate (GlcN-1-P) to produce N-acetylglucosamine-1-phosphate (GlcNAc-1-P), which is converted into UDP-GlcNAc by the transfer of uridine 5-monophosphate (from uridine 5-triphosphate), a reaction catalyzed by the N-terminal domain. The protein is Bifunctional protein GlmU of Neisseria gonorrhoeae.